A 474-amino-acid polypeptide reads, in one-letter code: 3-isopropylmalate dehydratase large subunit (474 aa).

Residues Cys-353, Cys-414, and Cys-417 each coordinate [4Fe-4S] cluster.

Belongs to the aconitase/IPM isomerase family. LeuC type 1 subfamily. As to quaternary structure, heterodimer of LeuC and LeuD. [4Fe-4S] cluster is required as a cofactor.

It catalyses the reaction (2R,3S)-3-isopropylmalate = (2S)-2-isopropylmalate. Its pathway is amino-acid biosynthesis; L-leucine biosynthesis; L-leucine from 3-methyl-2-oxobutanoate: step 2/4. Catalyzes the isomerization between 2-isopropylmalate and 3-isopropylmalate, via the formation of 2-isopropylmaleate. In Xylella fastidiosa (strain 9a5c), this protein is 3-isopropylmalate dehydratase large subunit.